Reading from the N-terminus, the 358-residue chain is Membrane-bound lytic murein transglycosylase C (358 aa).

Positions M1–A19 are cleaved as a signal peptide. The N-palmitoyl cysteine moiety is linked to residue C20. C20 is lipidated: S-diacylglycerol cysteine.

This sequence belongs to the transglycosylase Slt family.

The protein localises to the cell outer membrane. The enzyme catalyses Exolytic cleavage of the (1-&gt;4)-beta-glycosidic linkage between N-acetylmuramic acid (MurNAc) and N-acetylglucosamine (GlcNAc) residues in peptidoglycan, from either the reducing or the non-reducing ends of the peptidoglycan chains, with concomitant formation of a 1,6-anhydrobond in the MurNAc residue.. Its function is as follows. Murein-degrading enzyme. May play a role in recycling of muropeptides during cell elongation and/or cell division. The chain is Membrane-bound lytic murein transglycosylase C from Actinobacillus succinogenes (strain ATCC 55618 / DSM 22257 / CCUG 43843 / 130Z).